Consider the following 398-residue polypeptide: S-adenosylmethionine synthase (398 aa).

His-17 contributes to the ATP binding site. Asp-19 contacts Mg(2+). Residue Glu-45 participates in K(+) binding. L-methionine is bound by residues Glu-58 and Gln-101. The tract at residues 101-111 is flexible loop; that stretch reads QSPDIAQGVDT. Residues 176 to 178, 243 to 244, Asp-252, 258 to 259, and Lys-279 contribute to the ATP site; these read DGK, RF, and RK. Asp-252 lines the L-methionine pocket. Lys-283 serves as a coordination point for L-methionine.

The protein belongs to the AdoMet synthase family. As to quaternary structure, homotetramer; dimer of dimers. Requires Mg(2+) as cofactor. It depends on K(+) as a cofactor.

It localises to the cytoplasm. The catalysed reaction is L-methionine + ATP + H2O = S-adenosyl-L-methionine + phosphate + diphosphate. It participates in amino-acid biosynthesis; S-adenosyl-L-methionine biosynthesis; S-adenosyl-L-methionine from L-methionine: step 1/1. Functionally, catalyzes the formation of S-adenosylmethionine (AdoMet) from methionine and ATP. The overall synthetic reaction is composed of two sequential steps, AdoMet formation and the subsequent tripolyphosphate hydrolysis which occurs prior to release of AdoMet from the enzyme. This Staphylococcus saprophyticus subsp. saprophyticus (strain ATCC 15305 / DSM 20229 / NCIMB 8711 / NCTC 7292 / S-41) protein is S-adenosylmethionine synthase.